Here is a 252-residue protein sequence, read N- to C-terminus: Chitooligosaccharide deacetylase (252 aa).

Mg(2+) contacts are provided by His-61 and His-125.

Belongs to the YdjC deacetylase family. ChbG subfamily. Homodimer. Mg(2+) serves as cofactor.

The protein resides in the cytoplasm. It catalyses the reaction N,N'-diacetylchitobiose + H2O = N-acetyl-beta-D-glucosaminyl-(1-&gt;4)-D-glucosamine + acetate. It carries out the reaction diacetylchitobiose-6'-phosphate + H2O = N'-monoacetylchitobiose-6'-phosphate + acetate. The protein operates within glycan degradation; chitin degradation. Functionally, involved in the degradation of chitin. ChbG is essential for growth on the acetylated chitooligosaccharides chitobiose and chitotriose but is dispensable for growth on cellobiose and chitosan dimer, the deacetylated form of chitobiose. Deacetylation of chitobiose-6-P and chitotriose-6-P is necessary for both the activation of the chb promoter by the regulatory protein ChbR and the hydrolysis of phosphorylated beta-glucosides by the phospho-beta-glucosidase ChbF. Catalyzes the removal of only one acetyl group from chitobiose-6-P to yield monoacetylchitobiose-6-P, the inducer of ChbR and the substrate of ChbF. This chain is Chitooligosaccharide deacetylase, found in Escherichia coli O8 (strain IAI1).